The sequence spans 99 residues: Duplicate procyclin (99 aa).

In Trypanosoma brucei brucei, this protein is Duplicate procyclin.